We begin with the raw amino-acid sequence, 919 residues long: Bifunctional uridylyltransferase/uridylyl-removing enzyme (919 aa).

A uridylyltransferase region spans residues 1-373 (MTDPKVPRQR…LAGFNAKSRM (373 aa)). The segment at 374 to 727 (LKGYTVFGGK…CEFDEERGAT (354 aa)) is uridylyl-removing. Residues 489-611 (VDEHTIRAIG…VQSLERLRHL (123 aa)) enclose the HD domain. ACT domains lie at 728-811 (LVTV…LAKR) and 839-919 (VIEV…LEPA).

This sequence belongs to the GlnD family. Mg(2+) is required as a cofactor.

It catalyses the reaction [protein-PII]-L-tyrosine + UTP = [protein-PII]-uridylyl-L-tyrosine + diphosphate. It carries out the reaction [protein-PII]-uridylyl-L-tyrosine + H2O = [protein-PII]-L-tyrosine + UMP + H(+). Uridylyltransferase (UTase) activity is inhibited by glutamine, while glutamine activates uridylyl-removing (UR) activity. Its function is as follows. Modifies, by uridylylation and deuridylylation, the PII regulatory proteins (GlnB and homologs), in response to the nitrogen status of the cell that GlnD senses through the glutamine level. Under low glutamine levels, catalyzes the conversion of the PII proteins and UTP to PII-UMP and PPi, while under higher glutamine levels, GlnD hydrolyzes PII-UMP to PII and UMP (deuridylylation). Thus, controls uridylylation state and activity of the PII proteins, and plays an important role in the regulation of nitrogen assimilation and metabolism. This chain is Bifunctional uridylyltransferase/uridylyl-removing enzyme, found in Erythrobacter litoralis (strain HTCC2594).